Consider the following 512-residue polypeptide: Putative B3 domain-containing protein REM4 (512 aa).

A DNA-binding region (TF-B3 1) is located at residues 11 to 103 (NKAFFIIDLS…VFHVSPFGRS (93 aa)). The interval 111–145 (SSSTSDDDDDERTVFDDDEDDDVGDDDDNSISEDD) is disordered. Positions 115-145 (SDDDDDERTVFDDDEDDDVGDDDDNSISEDD) are enriched in acidic residues. 2 consecutive DNA-binding regions (TF-B3) follow at residues 169-265 (YLVA…LCPN) and 307-403 (ILTF…CSKV). Residues 408 to 465 (SSDGHKTADRKPRMTDQAPLAEEQTDNRVEKRAQVTEEGGPSRSTRADPGNLQQKQPC) are disordered. Basic and acidic residues-rich tracts occupy residues 410–421 (DGHKTADRKPRM) and 432–442 (TDNRVEKRAQV).

It is found in the nucleus. The polypeptide is Putative B3 domain-containing protein REM4 (REM4) (Arabidopsis thaliana (Mouse-ear cress)).